The following is a 219-amino-acid chain: uncharacterized protein (219 aa).

Residues 42-71 are disordered; sequence RQPRVVPVTSSDPEVVDDEDDEDQSDDSDE. A compositionally biased stretch (low complexity) spans 45–54; the sequence is RVVPVTSSDP. Residues 55–71 show a composition bias toward acidic residues; sequence EVVDDEDDEDQSDDSDE.

This is an uncharacterized protein from Dryophytes versicolor (chameleon treefrog).